The following is a 152-amino-acid chain: Transcriptional regulator MraZ (152 aa).

2 SpoVT-AbrB domains span residues 5–52 (ATLV…PLPE) and 81–124 (ASEC…DEQT).

It belongs to the MraZ family. In terms of assembly, forms oligomers.

It localises to the cytoplasm. Its subcellular location is the nucleoid. In terms of biological role, negatively regulates its own expression and that of the subsequent genes in the proximal part of the division and cell wall (dcw) gene cluster. Acts by binding directly to DNA. May also regulate the expression of genes outside the dcw cluster. The sequence is that of Transcriptional regulator MraZ from Erwinia tasmaniensis (strain DSM 17950 / CFBP 7177 / CIP 109463 / NCPPB 4357 / Et1/99).